Consider the following 1008-residue polypeptide: ATP-dependent zinc metalloprotease FTSH 12, chloroplastic (1008 aa).

A chloroplast-targeting transit peptide spans 1 to 49 (MEIAISYKPNPLISSSTQLLKRSKSFGLVRFPAKYGLGATRKKQLFRVY). Transmembrane regions (helical) follow at residues 154 to 174 (AALFIYAFALLLSCQRVYVAI) and 427 to 447 (IHYFMKVFIALLPGILILWFI). Residue 533–540 (GPPGTGKT) coordinates ATP. Residue histidine 769 participates in Zn(2+) binding. Glutamate 770 is an active-site residue. Zn(2+) contacts are provided by histidine 773 and aspartate 849.

It in the N-terminal section; belongs to the AAA ATPase family. The protein in the C-terminal section; belongs to the peptidase M41 family. Requires Zn(2+) as cofactor.

It localises to the plastid. Its subcellular location is the chloroplast thylakoid membrane. Probable ATP-dependent zinc metallopeptidase. This is ATP-dependent zinc metalloprotease FTSH 12, chloroplastic (FTSH12) from Arabidopsis thaliana (Mouse-ear cress).